A 34-amino-acid polypeptide reads, in one-letter code: MEVNILALIAIALFISVPTAFLIIIYVKTISENN.

Residues 5–25 (ILALIAIALFISVPTAFLIII) traverse the membrane as a helical segment.

Belongs to the PsbM family. In terms of assembly, PSII is composed of 1 copy each of membrane proteins PsbA, PsbB, PsbC, PsbD, PsbE, PsbF, PsbH, PsbI, PsbJ, PsbK, PsbL, PsbM, PsbT, PsbX, PsbY, PsbZ, Psb30/Ycf12, at least 3 peripheral proteins of the oxygen-evolving complex and a large number of cofactors. It forms dimeric complexes.

The protein resides in the plastid. It is found in the chloroplast thylakoid membrane. In terms of biological role, one of the components of the core complex of photosystem II (PSII). PSII is a light-driven water:plastoquinone oxidoreductase that uses light energy to abstract electrons from H(2)O, generating O(2) and a proton gradient subsequently used for ATP formation. It consists of a core antenna complex that captures photons, and an electron transfer chain that converts photonic excitation into a charge separation. This subunit is found at the monomer-monomer interface. In Gnetum parvifolium (Small-leaved jointfir), this protein is Photosystem II reaction center protein M.